A 165-amino-acid chain; its full sequence is Large ribosomal subunit protein uL10 (165 aa).

It belongs to the universal ribosomal protein uL10 family. As to quaternary structure, part of the ribosomal stalk of the 50S ribosomal subunit. The N-terminus interacts with L11 and the large rRNA to form the base of the stalk. The C-terminus forms an elongated spine to which L12 dimers bind in a sequential fashion forming a multimeric L10(L12)X complex.

Functionally, forms part of the ribosomal stalk, playing a central role in the interaction of the ribosome with GTP-bound translation factors. The protein is Large ribosomal subunit protein uL10 of Shewanella piezotolerans (strain WP3 / JCM 13877).